We begin with the raw amino-acid sequence, 289 residues long: Oxaloacetate decarboxylase (289 aa).

Serine 47 lines the substrate pocket. A Mg(2+)-binding site is contributed by aspartate 85. Substrate-binding residues include arginine 156 and histidine 232.

The protein belongs to the isocitrate lyase/PEP mutase superfamily. Oxaloacetate decarboxylase family. In terms of assembly, homotetramer; dimer of dimers. The cofactor is Mg(2+).

It catalyses the reaction oxaloacetate + H(+) = pyruvate + CO2. Functionally, catalyzes the decarboxylation of oxaloacetate into pyruvate. Seems to play a role in maintaining cellular concentrations of bicarbonate and pyruvate. This is Oxaloacetate decarboxylase from Rhodopseudomonas palustris (strain BisB5).